A 519-amino-acid polypeptide reads, in one-letter code: Bifunctional dihydrofolate reductase-thymidylate synthase 1 (519 aa).

Alanine 2 is subject to N-acetylalanine. A DHFR domain is found at 21-198 (TYQVVVAATK…LRFCFTTFVR (178 aa)). Valine 25 contributes to the substrate binding site. NADP(+)-binding positions include alanine 27 and 33 to 39 (GIGKDGK). Aspartate 47 serves as a coordination point for substrate. NADP(+) contacts are provided by residues 71-73 (RKT) and 92-95 (LTRS). Isoleucine 134 serves as a coordination point for substrate. 135–142 (GGGDILRE) contacts NADP(+). Threonine 155 is a substrate binding site. The interval 201 to 234 (SSADESSDESNGSQSLQFDGKKFLFLPKMVFDQH) is hinge. Positions 235 to 519 (EEFLYLNMVE…HKKIEMKMAV (285 aa)) are thymidylate synthase. Residue arginine 256 coordinates dUMP. Cysteine 401 is an active-site residue. Residues histidine 402, 420–424 (QRSAD), asparagine 432, and 462–464 (HVY) each bind dUMP.

In the N-terminal section; belongs to the dihydrofolate reductase family. The protein in the C-terminal section; belongs to the thymidylate synthase family. Heterodimer or homodimer.

It catalyses the reaction (6S)-5,6,7,8-tetrahydrofolate + NADP(+) = 7,8-dihydrofolate + NADPH + H(+). The catalysed reaction is dUMP + (6R)-5,10-methylene-5,6,7,8-tetrahydrofolate = 7,8-dihydrofolate + dTMP. Its pathway is cofactor biosynthesis; tetrahydrofolate biosynthesis; 5,6,7,8-tetrahydrofolate from 7,8-dihydrofolate: step 1/1. In terms of biological role, bifunctional enzyme. Involved in de novo dTMP biosynthesis. Key enzyme in folate metabolism. Can play two different roles depending on the source of dihydrofolate: de novo synthesis of tetrahydrofolate or recycling of the dihydrofolate released as one of the end products of the TS catalyzed reaction. Catalyzes an essential reaction for de novo glycine and purine synthesis, DNA precursor synthesis, and for the conversion of dUMP to dTMP. The sequence is that of Bifunctional dihydrofolate reductase-thymidylate synthase 1 (THY-1) from Arabidopsis thaliana (Mouse-ear cress).